Consider the following 639-residue polypeptide: E3 ubiquitin-protein ligase HEL2 (639 aa).

Positions 1–55 (MSESVKENVTPTRNFRRTQGPQNNTKPHNDRKNFRRKQKKNNLSAEPNLTTSSAD) are disordered. Serine 2 bears the N-acetylserine mark. Composition is skewed to polar residues over residues 7 to 26 (ENVTPTRNFRRTQGPQNNTK) and 43 to 54 (LSAEPNLTTSSA). Threonine 57 carries the phosphothreonine modification. The segment at 64-104 (CVICARKLTYVSLTPCHHKTCHICGFRQRALYNKKSCLICR) adopts an RING-type zinc-finger fold. The LIM zinc-binding domain maps to 222–292 (PMCAFCSGKR…QTCLDNKFVV (71 aa)). Positions 343–354 (SISSLPGSSSGS) are enriched in low complexity. 2 disordered regions span residues 343–367 (SISSLPGSSSGSRTDVRSASSPEES) and 550–631 (LESK…GKQK). Serine 354 carries the phosphoserine modification.

It belongs to the ZNF598/HEL2 family. As to quaternary structure, interacts with the E2 ubiquitin-conjugating enzyme UBC4. Interacts with histones H3 and H4.

It localises to the cytoplasm. The enzyme catalyses S-ubiquitinyl-[E2 ubiquitin-conjugating enzyme]-L-cysteine + [acceptor protein]-L-lysine = [E2 ubiquitin-conjugating enzyme]-L-cysteine + N(6)-ubiquitinyl-[acceptor protein]-L-lysine.. Its pathway is protein modification; protein ubiquitination. In terms of biological role, E3 ubiquitin-protein ligase that plays a key role in the ribosome quality control (RQC), a pathway that takes place when a ribosome has stalled during translation, leading to degradation of nascent peptide chains. HEL2 is activated when ribosomes are stalled within an mRNA following translation of prematurely polyadenylated mRNAs. Acts as a ribosome collision sensor: specifically recognizes and binds collided ribosome and ubiquitinates the 40S ribosomal proteins RPS20/uS10 and RPS3/uS3. Catalyzes 'Lys-63'-linked polyubiquitination of RPS20/uS10, promoting recruitment of the RQT (ribosome quality control trigger) complex, which drives the disassembly of stalled ribosomes, followed by degradation of nascent peptides. HEL2 also acts as an activator of the No-Go decay (NGD) pathway by mediating polyubiquitination of monoubiquitinated RPS3/uS3 and RPS7/es7: RPS3/uS3 and RPS7/es7 are first monoubiquitinated by MAG2 and MOT2/NOT4, respectively, and HEL2 mediates formation of 'Lys-63'-linked polyubiquitin chains on monoubiquitin, leading to activation of the NGD pathway in a CUE2-mediated endonucleolytic cleavage. Polyubiquitination of RPS3/uS3 also triggers degradation of non-functional 18S rRNA. The RQC pathway and the integrated stress response (ISR) antagonize each other: HEL2 prevents the activation of GCN2, while GCN2 suppresses RQC activation. The RQC pathway functions as a preventive quality control in the secretory pathway: HEL2 binds preferentially to the pre-engaged secretory ribosome-nascent chain complexes and prevents mistargeting of secretory proteins into mitochondria. Independently of its role in RQC, also involved in the polyubiquitination and proteasomal-degradation of excess histone proteins. This Saccharomyces cerevisiae (strain ATCC 204508 / S288c) (Baker's yeast) protein is E3 ubiquitin-protein ligase HEL2.